Here is a 1025-residue protein sequence, read N- to C-terminus: Multidrug resistance protein MdtC (1025 aa).

Transmembrane regions (helical) follow at residues 3–23 (FFAL…AITL), 333–353 (EVEQ…FLFL), 360–380 (IIPA…MYLC), 387–407 (LSLM…IVVL), 431–451 (VGFT…PLLL), 463–483 (FAVT…TLTP), 528–548 (LVGM…ISIP), 853–873 (VILI…LYES), 875–895 (VHPL…LLAL), 897–917 (LFNA…IGIV), 953–973 (PIMM…LSGG), and 984–1004 (ITIV…TPVV).

This sequence belongs to the resistance-nodulation-cell division (RND) (TC 2.A.6) family. MdtC subfamily. As to quaternary structure, part of a tripartite efflux system composed of MdtA, MdtB and MdtC. MdtC forms a heteromultimer with MdtB.

Its subcellular location is the cell inner membrane. The MdtABC tripartite complex confers resistance against novobiocin and deoxycholate. The sequence is that of Multidrug resistance protein MdtC from Escherichia coli O157:H7 (strain EC4115 / EHEC).